The sequence spans 241 residues: Regulatory protein VirG (241 aa).

The Response regulatory domain occupies 3 to 117; it reads HVLVIDDDVA…EFLARIRVAL (115 aa). Asp-52 bears the 4-aspartylphosphate mark. The segment at residues 129 to 229 is a DNA-binding region (ompR/PhoB-type); that stretch reads RRSFYFADWT…ARGAGYFFDA (101 aa).

Post-translationally, phosphorylated by wide host range (WHR) VirA protein.

It is found in the cytoplasm. Its function is as follows. VirG is required for the positive regulation of at least two vir loci encoded by the Ri plasmid of A.rhizogenes. The polypeptide is Regulatory protein VirG (virG) (Rhizobium rhizogenes (Agrobacterium rhizogenes)).